Here is a 201-residue protein sequence, read N- to C-terminus: Phospholipase A2 inhibitor PIP (201 aa).

The N-terminal stretch at 1 to 19 (MKSLQTICLLFIFIARGTS) is a signal peptide. 8 cysteine pairs are disulfide-bonded: cysteine 22–cysteine 46, cysteine 25–cysteine 32, cysteine 39–cysteine 67, cysteine 73–cysteine 94, cysteine 95–cysteine 100, cysteine 118–cysteine 143, cysteine 136–cysteine 165, and cysteine 169–cysteine 191. N-linked (GlcNAc...) asparagine glycosylation occurs at asparagine 157.

Homohexamer. Glycosylated. As to expression, expressed by the liver.

The protein localises to the secreted. Functionally, inhibits the enzymatic activity of phospholipase A2 (PA2). Binds to the major PLA2 toxin of D.russelli siamensis (Daboiatoxin, AC Q7T2R1, and AC Q7T3T5) at 1-2-fold molar excess of inhibitor to toxin. It exhibits broad spectra in neutralizing the toxicity of various snake venoms and toxins and inhibits the formation of edema in mice. May bind to PLA2 through its proline-rich hydrophobic core region. The sequence is that of Phospholipase A2 inhibitor PIP from Malayopython reticulatus (Reticulate python).